A 242-amino-acid polypeptide reads, in one-letter code: Protein HTATIP2 (242 aa).

A2 bears the N-acetylalanine mark. The segment at 2 to 25 (AETEALSKLREDFRMQNKSVFILG) is required for interaction with elongation factor EEF1A1. NADPH contacts are provided by S27, G28, E29, T30, R52, R53, L92, G93, Y143, K147, L170, and R178. The active-site Proton acceptor is the Y143. Residue K147 is part of the active site.

In terms of assembly, monomer. Forms homodimers during oxidative stress. Interacts (via N-terminus) with elongation factor EEF1A1 (via middle-region); the interaction is direct and competes with EEF1A1 binding to guanyl-nucleotide exchange factor EEF1B2, thereby inhibiting GDP for GTP exchange and reactivation of EEF1A1. Interacts with nuclear transport receptors XPO4, IPO5/RANBP5, IPO7, IPO9 and KPNB1 as well as GCN1L1/GCN1 and LRPPRC probably through their HEAT repeats. Binds NCOA5/CIA.

It localises to the cytoplasm. Represses translation by preventing reactivation of elongation factor eEF1A. May also inhibit nuclear import by competing with nuclear import substrates for binding to a subset of nuclear transport receptors. Has additionally been proposed to act as a redox sensor involved in cellular oxidative stress surveillance. This is Protein HTATIP2 (HTATIP2) from Pongo pygmaeus (Bornean orangutan).